The primary structure comprises 247 residues: 5-oxoprolinase subunit A (247 aa).

The protein belongs to the LamB/PxpA family. In terms of assembly, forms a complex composed of PxpA, PxpB and PxpC.

It carries out the reaction 5-oxo-L-proline + ATP + 2 H2O = L-glutamate + ADP + phosphate + H(+). In terms of biological role, catalyzes the cleavage of 5-oxoproline to form L-glutamate coupled to the hydrolysis of ATP to ADP and inorganic phosphate. This chain is 5-oxoprolinase subunit A, found in Histophilus somni (strain 129Pt) (Haemophilus somnus).